The primary structure comprises 369 residues: tRNA-specific 2-thiouridylase MnmA (369 aa).

Residues 7 to 14 (GISGGVDS) and methionine 33 each bind ATP. An interaction with target base in tRNA region spans residues 93–95 (NPD). The Nucleophile role is filled by cysteine 98. An intrachain disulfide couples cysteine 98 to cysteine 195. Position 123 (glycine 123) interacts with ATP. Residues 145 to 147 (KDQ) are interaction with tRNA. Cysteine 195 serves as the catalytic Cysteine persulfide intermediate. Residues 307 to 308 (RY) form an interaction with tRNA region.

Belongs to the MnmA/TRMU family. In terms of assembly, interacts with TusE.

The protein resides in the cytoplasm. It carries out the reaction S-sulfanyl-L-cysteinyl-[protein] + uridine(34) in tRNA + AH2 + ATP = 2-thiouridine(34) in tRNA + L-cysteinyl-[protein] + A + AMP + diphosphate + H(+). Catalyzes the 2-thiolation of uridine at the wobble position (U34) of tRNA(Lys), tRNA(Glu) and tRNA(Gln), leading to the formation of s(2)U34, the first step of tRNA-mnm(5)s(2)U34 synthesis. Sulfur is provided by IscS, via a sulfur-relay system. Binds ATP and its substrate tRNAs. The chain is tRNA-specific 2-thiouridylase MnmA from Blochmanniella floridana.